A 387-amino-acid polypeptide reads, in one-letter code: tRNA pseudouridine synthase B (387 aa).

The active-site Nucleophile is Asp-43.

Belongs to the pseudouridine synthase TruB family. Type 1 subfamily.

The enzyme catalyses uridine(55) in tRNA = pseudouridine(55) in tRNA. In terms of biological role, responsible for synthesis of pseudouridine from uracil-55 in the psi GC loop of transfer RNAs. The chain is tRNA pseudouridine synthase B from Bifidobacterium longum (strain DJO10A).